The chain runs to 262 residues: Acyl-coenzyme A diphosphatase FITM2 (262 aa).

The Cytoplasmic segment spans residues 1–23 (MEHLERCEWLLRGTLVRAAVRRY). A helical transmembrane segment spans residues 24-44 (LPWALVASMLAGSLLKELSPL). Residues 45–57 (PESYLSNKRNVLN) are Lumenal-facing. Residues 58–78 (VYFVKVAWAWTFCLLLPFIAL) form a helical membrane-spanning segment. The Cytoplasmic segment spans residues 79–93 (TNYHLTGKAGLVLRR). Residues 94–114 (LSTLLVGTAIWYICTSIFSNI) traverse the membrane as a helical segment. The Lumenal segment spans residues 115–145 (EHYTGSCYQSPALEGVRKEHQSKQQCHQEGG). The helical transmembrane segment at 146 to 166 (FWHGFDISGHSFLLTFCALMI) threads the bilayer. Residue histidine 155 is part of the active site. The Cytoplasmic portion of the chain corresponds to 167–190 (VEEMSVLHEVKTDRSHCLHTAITT). A helical transmembrane segment spans residues 191 to 211 (LVVALGILTFIWVLMFLCTAV). Over 212–218 (YFHNLSQ) the chain is Lumenal. Residue histidine 214 is part of the active site. A helical transmembrane segment spans residues 219-239 (KVFGTLFGLLSWYGTYGFWYP). Residues 240–262 (KAFSPGLPPQSCSLNLKQDSYKK) lie on the Cytoplasmic side of the membrane.

The protein belongs to the FIT family. FIT2 subfamily. Widely expressed.

It localises to the endoplasmic reticulum membrane. It carries out the reaction an acyl-CoA + H2O = an acyl-4'-phosphopantetheine + adenosine 3',5'-bisphosphate + 2 H(+). The catalysed reaction is (9Z)-octadecenoyl-CoA + H2O = S-(9Z-octadecenoyl)-4'-phosphopantetheine + adenosine 3',5'-bisphosphate + 2 H(+). The enzyme catalyses (5Z,8Z,11Z,14Z)-eicosatetraenoyl-CoA + H2O = S-(5Z,8Z,11Z,14Z-eicosatetraenoyl)-4'-phosphopantetheine + adenosine 3',5'-bisphosphate + 2 H(+). It catalyses the reaction hexadecanoyl-CoA + H2O = S-hexadecanoyl-4'-phosphopantetheine + adenosine 3',5'-bisphosphate + 2 H(+). In terms of biological role, fatty acyl-coenzyme A (CoA) diphosphatase that hydrolyzes fatty acyl-CoA to yield acyl-4'-phosphopantetheine and adenosine 3',5'-bisphosphate. Preferentially hydrolyzes unsaturated long-chain acyl-CoA substrates such as oleoyl-CoA/(9Z)-octadecenoyl-CoA and arachidonoyl-CoA/(5Z,8Z,11Z,14Z)-eicosatetraenoyl-CoA in the endoplasmic reticulum (ER) lumen. This catalytic activity is required for maintaining ER structure and for lipid droplets (LDs) biogenesis, which are lipid storage organelles involved in maintaining lipid and energy homeostasis. Directly binds to diacylglycerol (DAGs) and triacylglycerol, which is also important for LD biogenesis. May support directional budding of nacent LDs from the ER into the cytosol by reducing DAG levels at sites of LD formation. Plays a role in the regulation of cell morphology and cytoskeletal organization. The chain is Acyl-coenzyme A diphosphatase FITM2 from Homo sapiens (Human).